The chain runs to 169 residues: Required for excision 1-B domain-containing protein (169 aa).

The polypeptide is Required for excision 1-B domain-containing protein (Mus musculus (Mouse)).